The sequence spans 251 residues: Flap endonuclease Xni (251 aa).

Asp-104 contributes to the Mg(2+) binding site. In terms of domain architecture, 5'-3' exonuclease spans 160–249 (VQPQQLPDYW…IDGNLQQLRL (90 aa)). Residues Leu-171, Ala-172, Pro-180, Val-182, and Ile-185 each contribute to the K(+) site. The segment at 184-189 (GIGPKS) is interaction with DNA.

Belongs to the Xni family. The cofactor is Mg(2+). K(+) serves as cofactor.

In terms of biological role, has flap endonuclease activity. During DNA replication, flap endonucleases cleave the 5'-overhanging flap structure that is generated by displacement synthesis when DNA polymerase encounters the 5'-end of a downstream Okazaki fragment. In Escherichia coli O17:K52:H18 (strain UMN026 / ExPEC), this protein is Flap endonuclease Xni.